We begin with the raw amino-acid sequence, 138 residues long: Ig heavy chain V region TEPC 1017 (138 aa).

Positions 1–20 are cleaved as a signal peptide; sequence MGWSYIILFLVATATDVHSQ. The tract at residues 21–49 is framework-1; sequence VQLQQPGAELVKPGASVQLSCKASGHTFT. Cysteines 41 and 115 form a disulfide. The tract at residues 50-54 is complementarity-determining-1; the sequence is NYWIH. The segment at 55–68 is framework-2; that stretch reads WVKQRPGQGLEWIG. The segment at 69-85 is complementarity-determining-2; that stretch reads EINPNDGRSNYNEKFKN. The interval 86–117 is framework-3; the sequence is KATLTVDKSSSTAYMQLSSLTPEEFAVYYCAR. Positions 118-127 are complementarity-determining-3; the sequence is SDGYYDWFVY. Residues 128 to 138 are framework-4; the sequence is WGQGTLVTFSA.

This chain is Ig heavy chain V region TEPC 1017, found in Mus musculus (Mouse).